The following is an 856-amino-acid chain: Phospholipase D gamma 2 (856 aa).

One can recognise a C2 domain in the interval 21-161; the sequence is PLATSSGSLM…CSGNRIEGLF (141 aa). D223 contributes to the Ca(2+) binding site. The 36-residue stretch at 362–397 folds into the PLD phosphodiesterase 1 domain; it reads TIYTHHQKTMIVDAEAAQNRRKIVAFVGGLDLCNGR. Catalysis depends on residues H367, K369, and D374. H367 provides a ligand contact to a 1,2-diacyl-sn-glycero-3-phosphate. H403 and H435 together coordinate Ca(2+). 2 residues coordinate a 1,2-diacyl-sn-glycero-3-phosphate: Q562 and H707. One can recognise a PLD phosphodiesterase 2 domain in the interval 702–729; it reads FMIYVHSKGMVVDDEFVLIGSANINQRS. Catalysis depends on residues H707, K709, and D714. A Ca(2+)-binding site is contributed by E770.

The protein belongs to the phospholipase D family. C2-PLD subfamily. Requires Ca(2+) as cofactor. Highly expressed in roots and flowers, moderately in stems, leaves and seedlings and low in siliques. Not detected in seeds.

The protein resides in the cytoplasm. It is found in the membrane. It catalyses the reaction a 1,2-diacyl-sn-glycero-3-phosphocholine + H2O = a 1,2-diacyl-sn-glycero-3-phosphate + choline + H(+). Its activity is regulated as follows. Inhibited by neomycin. Functionally, hydrolyzes glycerol-phospholipids at the terminal phosphodiesteric bond to generate phosphatidic acids (PA). Plays an important role in various cellular processes, including phytohormone action, vesicular trafficking, secretion, cytoskeletal arrangement, meiosis, tumor promotion, pathogenesis, membrane deterioration and senescence. Can use phosphatidylserine but prefers ethanolamine-containing lipids as substrates. Can use phosphatidylcholine (PC) as substrates in the presence of phosphatidylethanolamine (PE) and PIP2. Involved in membrane lipid modulation under aluminum (Al) stress and negatively modulate plant tolerance to Al. This chain is Phospholipase D gamma 2, found in Arabidopsis thaliana (Mouse-ear cress).